A 722-amino-acid chain; its full sequence is Tegument protein UL46 (722 aa).

The interval arginine 423–glutamine 534 is disordered. 2 stretches are compositionally biased toward basic and acidic residues: residues cysteine 440–asparagine 451 and histidine 474–proline 491. Positions proline 510–glutamine 522 are enriched in pro residues. Low complexity predominate over residues arginine 523–glutamine 534.

The protein belongs to the herpesviridae HHV-1 VP11/12 protein family. As to quaternary structure, interacts with VP16. Interacts with host LCK, PIK3R1, SHC1 AND GRB2; these interactions promote the activation of the PI3K/AKT pathway. Interacts with host YWHAB. Interacts with ICP0; this interaction targets UL46 for degradation by the proteasome. In terms of processing, phosphorylated by host LCK. The phosphorylation seems to be lymphocyte-specific.

It localises to the virion tegument. Its subcellular location is the host cell membrane. Plays a role in the activation of the host PI3K/AKT pathway to promote cell survival. Interacts with and activates host LCK and thereby recruits downstream partners SHC1, GRB2 and PI3KR1 in order to activate the PI3K pathway by phosphorylating host AKT on its activating residues. This mechanism is inhibited by the viral protein US3 that instead promotes incorporation of UL46 into virions. The chain is Tegument protein UL46 from Homo sapiens (Human).